Reading from the N-terminus, the 66-residue chain is Large ribosomal subunit protein bL35 (66 aa).

2 stretches are compositionally biased toward basic residues: residues 1–15 and 27–40; these read MPKLKTKSGAKKRFK and AGKRHGMIKRTKKQ. Residues 1–40 form a disordered region; the sequence is MPKLKTKSGAKKRFKVTGTGKVMSAHAGKRHGMIKRTKKQ.

It belongs to the bacterial ribosomal protein bL35 family.

The polypeptide is Large ribosomal subunit protein bL35 (Rhodopseudomonas palustris (strain BisA53)).